A 174-amino-acid polypeptide reads, in one-letter code: UPF0340 protein SH0921 (174 aa).

Belongs to the UPF0340 family.

This Staphylococcus haemolyticus (strain JCSC1435) protein is UPF0340 protein SH0921.